A 113-amino-acid polypeptide reads, in one-letter code: Hydrogenase maturation factor HypA (113 aa).

His2 serves as a coordination point for Ni(2+). The Zn(2+) site is built by Cys73, Cys76, Cys89, and Cys92.

Belongs to the HypA/HybF family.

In terms of biological role, involved in the maturation of [NiFe] hydrogenases. Required for nickel insertion into the metal center of the hydrogenase. The chain is Hydrogenase maturation factor HypA from Azorhizobium caulinodans (strain ATCC 43989 / DSM 5975 / JCM 20966 / LMG 6465 / NBRC 14845 / NCIMB 13405 / ORS 571).